Here is a 213-residue protein sequence, read N- to C-terminus: Ribosomal RNA small subunit methyltransferase G (213 aa).

Residues glycine 75, phenylalanine 80, 128–129 (IE), and arginine 144 contribute to the S-adenosyl-L-methionine site.

This sequence belongs to the methyltransferase superfamily. RNA methyltransferase RsmG family.

It localises to the cytoplasm. The enzyme catalyses guanosine(527) in 16S rRNA + S-adenosyl-L-methionine = N(7)-methylguanosine(527) in 16S rRNA + S-adenosyl-L-homocysteine. Its function is as follows. Specifically methylates the N7 position of guanine in position 527 of 16S rRNA. This Brucella abortus (strain S19) protein is Ribosomal RNA small subunit methyltransferase G.